The primary structure comprises 485 residues: Glutamyl-tRNA(Gln) amidotransferase subunit A (485 aa).

Active-site charge relay system residues include K79 and S154. S178 functions as the Acyl-ester intermediate in the catalytic mechanism.

It belongs to the amidase family. GatA subfamily. In terms of assembly, heterotrimer of A, B and C subunits.

The catalysed reaction is L-glutamyl-tRNA(Gln) + L-glutamine + ATP + H2O = L-glutaminyl-tRNA(Gln) + L-glutamate + ADP + phosphate + H(+). Its function is as follows. Allows the formation of correctly charged Gln-tRNA(Gln) through the transamidation of misacylated Glu-tRNA(Gln) in organisms which lack glutaminyl-tRNA synthetase. The reaction takes place in the presence of glutamine and ATP through an activated gamma-phospho-Glu-tRNA(Gln). The polypeptide is Glutamyl-tRNA(Gln) amidotransferase subunit A (Staphylococcus aureus (strain bovine RF122 / ET3-1)).